Reading from the N-terminus, the 116-residue chain is UPF0122 protein CA_C1753 (116 aa).

Belongs to the UPF0122 family.

In terms of biological role, might take part in the signal recognition particle (SRP) pathway. This is inferred from the conservation of its genetic proximity to ftsY/ffh. May be a regulatory protein. In Clostridium acetobutylicum (strain ATCC 824 / DSM 792 / JCM 1419 / IAM 19013 / LMG 5710 / NBRC 13948 / NRRL B-527 / VKM B-1787 / 2291 / W), this protein is UPF0122 protein CA_C1753.